A 211-amino-acid chain; its full sequence is uncharacterized protein (211 aa).

2 disordered regions span residues Met-1 to Lys-73 and Thr-96 to Ser-123. Composition is skewed to polar residues over residues Ser-26–Ser-35 and Ala-53–Asn-62. Low complexity predominate over residues Lys-63–Lys-73. Ser-182 is modified (phosphoserine). At Thr-184 the chain carries Phosphothreonine. Ser-186 is subject to Phosphoserine.

This is an uncharacterized protein from Saccharomyces cerevisiae (strain ATCC 204508 / S288c) (Baker's yeast).